Reading from the N-terminus, the 161-residue chain is Sec-independent protein translocase protein TatB (161 aa).

The helical transmembrane segment at 2-22 threads the bilayer; it reads FNDIGALELVTLVVLAVLVFG. The segment at 102-161 is disordered; the sequence is DAVHGRDAESSSSGSSSGSSSAASGNGRVDMSKKPEKPEKPGKTDKPAADDRPPFDMDAT. A compositionally biased stretch (low complexity) spans 111 to 126; the sequence is SSSSGSSSGSSSAASG. Basic and acidic residues predominate over residues 131–161; the sequence is DMSKKPEKPEKPGKTDKPAADDRPPFDMDAT.

The protein belongs to the TatB family. In terms of assembly, the Tat system comprises two distinct complexes: a TatABC complex, containing multiple copies of TatA, TatB and TatC subunits, and a separate TatA complex, containing only TatA subunits. Substrates initially bind to the TatABC complex, which probably triggers association of the separate TatA complex to form the active translocon.

Its subcellular location is the cell membrane. Functionally, part of the twin-arginine translocation (Tat) system that transports large folded proteins containing a characteristic twin-arginine motif in their signal peptide across membranes. Together with TatC, TatB is part of a receptor directly interacting with Tat signal peptides. TatB may form an oligomeric binding site that transiently accommodates folded Tat precursor proteins before their translocation. The sequence is that of Sec-independent protein translocase protein TatB from Streptomyces coelicolor (strain ATCC BAA-471 / A3(2) / M145).